A 245-amino-acid chain; its full sequence is Malonyl-[acyl-carrier protein] O-methyltransferase (245 aa).

This sequence belongs to the methyltransferase superfamily.

It catalyses the reaction malonyl-[ACP] + S-adenosyl-L-methionine = malonyl-[ACP] methyl ester + S-adenosyl-L-homocysteine. The protein operates within cofactor biosynthesis; biotin biosynthesis. Converts the free carboxyl group of a malonyl-thioester to its methyl ester by transfer of a methyl group from S-adenosyl-L-methionine (SAM). It allows to synthesize pimeloyl-ACP via the fatty acid synthetic pathway. The chain is Malonyl-[acyl-carrier protein] O-methyltransferase from Calditerrivibrio nitroreducens (strain DSM 19672 / NBRC 101217 / Yu37-1).